We begin with the raw amino-acid sequence, 272 residues long: Ribosomal RNA small subunit methyltransferase A (272 aa).

6 residues coordinate S-adenosyl-L-methionine: Asn-27, Leu-29, Gly-54, Glu-75, Asp-97, and Asn-117.

It belongs to the class I-like SAM-binding methyltransferase superfamily. rRNA adenine N(6)-methyltransferase family. RsmA subfamily.

It is found in the cytoplasm. It carries out the reaction adenosine(1518)/adenosine(1519) in 16S rRNA + 4 S-adenosyl-L-methionine = N(6)-dimethyladenosine(1518)/N(6)-dimethyladenosine(1519) in 16S rRNA + 4 S-adenosyl-L-homocysteine + 4 H(+). Specifically dimethylates two adjacent adenosines (A1518 and A1519) in the loop of a conserved hairpin near the 3'-end of 16S rRNA in the 30S particle. May play a critical role in biogenesis of 30S subunits. This chain is Ribosomal RNA small subunit methyltransferase A, found in Malacoplasma penetrans (strain HF-2) (Mycoplasma penetrans).